The following is a 70-amino-acid chain: Envelope small membrane protein (70 aa).

Gly2 carries the N-myristoyl glycine; by host lipid modification. Residues 2–15 (GSLWSKISQLFVDA) are endoplasmic reticulum retention signal. Over 2-25 (GSLWSKISQLFVDAFTEFLVSVVD) the chain is Virion surface. The chain crosses the membrane as a helical span at residues 26–46 (IAIFLAILFGFTVAGWLLVFL). The Intravirion segment spans residues 47-70 (LRVVCSALLRSRSAIHSPELSKVL).

The protein belongs to the arteriviridae E protein family. As to quaternary structure, homooligomer. Associates with itself into higher-order structures, including dimers, trimers and tetramers. Associates with the GP2a-GP3-GP4 complex. In terms of processing, myristoylated. Post-translationally, not glycosylated.

The protein resides in the virion membrane. Its subcellular location is the host endoplasmic reticulum membrane. The protein localises to the host Golgi apparatus membrane. It localises to the secreted. Its function is as follows. Minor envelope protein. May function as a viroporin in the virion envelope that facilitates uncoating of the virus in order to release the genomic RNA into the cytoplasm for subsequent replication. The protein is Envelope small membrane protein (GP2b) of Sus scrofa (Pig).